The following is a 945-amino-acid chain: Isoleucine--tRNA ligase (945 aa).

Residues 66–76 carry the 'HIGH' region motif; the sequence is PYANGDIHLGH. An L-isoleucyl-5'-AMP-binding site is contributed by E581. Residues 622-626 carry the 'KMSKS' region motif; sequence KMSKS. K625 lines the ATP pocket. 4 residues coordinate Zn(2+): C908, C911, C928, and C931.

It belongs to the class-I aminoacyl-tRNA synthetase family. IleS type 1 subfamily. In terms of assembly, monomer. It depends on Zn(2+) as a cofactor.

The protein resides in the cytoplasm. The catalysed reaction is tRNA(Ile) + L-isoleucine + ATP = L-isoleucyl-tRNA(Ile) + AMP + diphosphate. Functionally, catalyzes the attachment of isoleucine to tRNA(Ile). As IleRS can inadvertently accommodate and process structurally similar amino acids such as valine, to avoid such errors it has two additional distinct tRNA(Ile)-dependent editing activities. One activity is designated as 'pretransfer' editing and involves the hydrolysis of activated Val-AMP. The other activity is designated 'posttransfer' editing and involves deacylation of mischarged Val-tRNA(Ile). The sequence is that of Isoleucine--tRNA ligase from Paraburkholderia xenovorans (strain LB400).